Here is a 446-residue protein sequence, read N- to C-terminus: Tubulin beta-5 chain (446 aa).

Positions 1-4 (MREI) match the MREI motif motif. GTP is bound by residues Gln11, Glu69, Ser138, Gly142, Thr143, Gly144, Asn204, and Asn226. Glu69 is a Mg(2+) binding site. 5-glutamyl polyglutamate is present on Glu438.

The protein belongs to the tubulin family. As to quaternary structure, dimer of alpha and beta chains. A typical microtubule is a hollow water-filled tube with an outer diameter of 25 nm and an inner diameter of 15 nM. Alpha-beta heterodimers associate head-to-tail to form protofilaments running lengthwise along the microtubule wall with the beta-tubulin subunit facing the microtubule plus end conferring a structural polarity. Microtubules usually have 13 protofilaments but different protofilament numbers can be found in some organisms and specialized cells. Mg(2+) is required as a cofactor. In terms of processing, some glutamate residues at the C-terminus are polyglycylated, resulting in polyglycine chains on the gamma-carboxyl group. Glycylation is mainly limited to tubulin incorporated into axonemes (cilia and flagella) whereas glutamylation is prevalent in neuronal cells, centrioles, axonemes, and the mitotic spindle. Both modifications can coexist on the same protein on adjacent residues, and lowering polyglycylation levels increases polyglutamylation, and reciprocally. The precise function of polyglycylation is still unclear. Post-translationally, some glutamate residues at the C-terminus are polyglutamylated, resulting in polyglutamate chains on the gamma-carboxyl group. Polyglutamylation plays a key role in microtubule severing by spastin (SPAST). SPAST preferentially recognizes and acts on microtubules decorated with short polyglutamate tails: severing activity by SPAST increases as the number of glutamates per tubulin rises from one to eight, but decreases beyond this glutamylation threshold.

It localises to the cytoplasm. The protein localises to the cytoskeleton. Its function is as follows. Tubulin is the major constituent of microtubules, a cylinder consisting of laterally associated linear protofilaments composed of alpha- and beta-tubulin heterodimers. Microtubules grow by the addition of GTP-tubulin dimers to the microtubule end, where a stabilizing cap forms. Below the cap, tubulin dimers are in GDP-bound state, owing to GTPase activity of alpha-tubulin. The polypeptide is Tubulin beta-5 chain (Gallus gallus (Chicken)).